A 212-amino-acid chain; its full sequence is Pyridoxine/pyridoxamine 5'-phosphate oxidase (212 aa).

Substrate-binding positions include 8-11 (RREY) and lysine 66. Residues 61–66 (RIVLLK), 76–77 (FT), arginine 82, lysine 83, and glutamine 105 each bind FMN. The substrate site is built by tyrosine 123, arginine 127, and serine 131. Residues 140–141 (QS) and tryptophan 185 contribute to the FMN site. A substrate-binding site is contributed by 191-193 (RLH). Arginine 195 contacts FMN.

The protein belongs to the pyridoxamine 5'-phosphate oxidase family. In terms of assembly, homodimer. It depends on FMN as a cofactor.

It catalyses the reaction pyridoxamine 5'-phosphate + O2 + H2O = pyridoxal 5'-phosphate + H2O2 + NH4(+). The enzyme catalyses pyridoxine 5'-phosphate + O2 = pyridoxal 5'-phosphate + H2O2. It participates in cofactor metabolism; pyridoxal 5'-phosphate salvage; pyridoxal 5'-phosphate from pyridoxamine 5'-phosphate: step 1/1. Its pathway is cofactor metabolism; pyridoxal 5'-phosphate salvage; pyridoxal 5'-phosphate from pyridoxine 5'-phosphate: step 1/1. Catalyzes the oxidation of either pyridoxine 5'-phosphate (PNP) or pyridoxamine 5'-phosphate (PMP) into pyridoxal 5'-phosphate (PLP). The protein is Pyridoxine/pyridoxamine 5'-phosphate oxidase of Shewanella pealeana (strain ATCC 700345 / ANG-SQ1).